Here is a 490-residue protein sequence, read N- to C-terminus: Cytochrome P450 71A25 (490 aa).

A helical transmembrane segment spans residues 1 to 21 (MMMMIILLWSIIFMTILFLKK). Cysteine 431 provides a ligand contact to heme.

It belongs to the cytochrome P450 family. Heme is required as a cofactor.

The protein localises to the membrane. The sequence is that of Cytochrome P450 71A25 (CYP71A25) from Arabidopsis thaliana (Mouse-ear cress).